Consider the following 332-residue polypeptide: Autoinducer 2 import system permease protein LsrD (332 aa).

10 helical membrane passes run 7-27 (YSWE…FGLI), 45-65 (ICIG…GMDI), 70-90 (TIGL…PLPL), 91-111 (AIII…GLII), 118-138 (LVIT…LSGM), 162-182 (FLGI…FWLL), 216-236 (VYAM…SYFG), 240-260 (SDLG…GGAN), 261-281 (IYGG…VGFL), and 288-308 (AGVP…VVVV).

Belongs to the binding-protein-dependent transport system permease family. AraH/RbsC subfamily. The complex is composed of two ATP-binding proteins (LsrA), two transmembrane proteins (LsrC and LsrD) and a solute-binding protein (LsrB).

It is found in the cell inner membrane. Its function is as follows. Part of the ABC transporter complex LsrABCD involved in autoinducer 2 (AI-2) import. Probably responsible for the translocation of the substrate across the membrane. The protein is Autoinducer 2 import system permease protein LsrD (lsrD) of Salmonella paratyphi B (strain ATCC BAA-1250 / SPB7).